Reading from the N-terminus, the 289-residue chain is Shikimate dehydrogenase (NADP(+)) (289 aa).

Shikimate contacts are provided by residues 22–24 (SRS) and Thr69. Lys73 functions as the Proton acceptor in the catalytic mechanism. An NADP(+)-binding site is contributed by Glu85. Positions 94 and 109 each coordinate shikimate. Residues 134-138 (GAGGA), 158-163 (NRTLSR), and Ile226 contribute to the NADP(+) site. A shikimate-binding site is contributed by Tyr228. Gly249 serves as a coordination point for NADP(+).

This sequence belongs to the shikimate dehydrogenase family. In terms of assembly, homodimer.

It carries out the reaction shikimate + NADP(+) = 3-dehydroshikimate + NADPH + H(+). Its pathway is metabolic intermediate biosynthesis; chorismate biosynthesis; chorismate from D-erythrose 4-phosphate and phosphoenolpyruvate: step 4/7. In terms of biological role, involved in the biosynthesis of the chorismate, which leads to the biosynthesis of aromatic amino acids. Catalyzes the reversible NADPH linked reduction of 3-dehydroshikimate (DHSA) to yield shikimate (SA). In Brucella ovis (strain ATCC 25840 / 63/290 / NCTC 10512), this protein is Shikimate dehydrogenase (NADP(+)).